The following is a 193-amino-acid chain: Flagellar transcriptional regulator FlhC (193 aa).

Positions 138, 141, 158, and 161 each coordinate Zn(2+).

It belongs to the FlhC family. As to quaternary structure, heterohexamer composed of two FlhC and four FlhD subunits. Each FlhC binds a FlhD dimer, forming a heterotrimer, and a hexamer assembles by dimerization of two heterotrimers. The cofactor is Zn(2+).

It localises to the cytoplasm. Its function is as follows. Functions in complex with FlhD as a master transcriptional regulator that regulates transcription of several flagellar and non-flagellar operons by binding to their promoter region. Activates expression of class 2 flagellar genes, including fliA, which is a flagellum-specific sigma factor that turns on the class 3 genes. Also regulates genes whose products function in a variety of physiological pathways. This chain is Flagellar transcriptional regulator FlhC, found in Proteus mirabilis.